The sequence spans 203 residues: Large ribosomal subunit protein uL18 (203 aa).

It belongs to the universal ribosomal protein uL18 family. In terms of assembly, part of the 50S ribosomal subunit. Contacts the 5S and 23S rRNAs.

Functionally, this is one of the proteins that bind and probably mediate the attachment of the 5S RNA into the large ribosomal subunit, where it forms part of the central protuberance. The polypeptide is Large ribosomal subunit protein uL18 (Pyrococcus furiosus (strain ATCC 43587 / DSM 3638 / JCM 8422 / Vc1)).